The sequence spans 398 residues: 2-amino-3-ketobutyrate coenzyme A ligase (398 aa).

Residue 111 to 112 coordinates pyridoxal 5'-phosphate; the sequence is CF. Histidine 136 serves as a coordination point for substrate. Residues serine 185, 210 to 213, 241 to 244, and 274 to 275 contribute to the pyridoxal 5'-phosphate site; these read DDSH, TLGK, and SN. Residue lysine 244 is modified to N6-(pyridoxal phosphate)lysine. Arginine 368 contacts substrate.

Belongs to the class-II pyridoxal-phosphate-dependent aminotransferase family. Homodimer. It depends on pyridoxal 5'-phosphate as a cofactor.

It catalyses the reaction glycine + acetyl-CoA = (2S)-2-amino-3-oxobutanoate + CoA. It participates in amino-acid degradation; L-threonine degradation via oxydo-reductase pathway; glycine from L-threonine: step 2/2. Catalyzes the cleavage of 2-amino-3-ketobutyrate to glycine and acetyl-CoA. In Escherichia coli (strain K12), this protein is 2-amino-3-ketobutyrate coenzyme A ligase.